The primary structure comprises 838 residues: Rho GTPase-activating protein 12 (838 aa).

Positions 10–72 (AGQAYIEVEY…PAQYVKEVTR (63 aa)) constitute an SH3 domain. 2 stretches are compositionally biased toward polar residues: residues 155–172 (GKFN…QNRT) and 189–198 (TSFSQEQSCD). Residues 155–239 (GKFNSDSHSP…PPNQGRPDSP (85 aa)) form a disordered region. Ser163 bears the Phosphoserine mark. Ser199, Ser211, and Ser213 each carry phosphoserine. Thr228 and Thr229 each carry phosphothreonine. Ser238 is subject to Phosphoserine. Tyr241 is modified (phosphotyrosine). The region spanning 263 to 296 (IQVNGEWETHKDSSGRCYYYNRTTQERTWKPPRW) is the WW 1 domain. Positions 291–302 (WKPPRWARDVST) are enriched in basic and acidic residues. The disordered stretch occupies residues 291 to 346 (WKPPRWARDVSTSRDFQSPGEQEPLSSEENYHSSCFSQSDSQCGSPPRGWSEELDE). The segment covering 303–334 (SRDFQSPGEQEPLSSEENYHSSCFSQSDSQCG) has biased composition (polar residues). One can recognise a WW 2 domain in the interval 355–388 (DYTKEKWLKHVDDQGRQYYYSADGSRSEWELPKY). Residues 425–456 (DSNDKDSPTTTKLCLPENESPPTSSKHQDPGQ) are disordered. A PH domain is found at 466 to 567 (KITENGKKVR…WFKVLSSTIN (102 aa)). Residues 572-582 (EADEAAEEETP) show a composition bias toward acidic residues. The segment at 572-620 (EADEAAEEETPDSPGVEKHDKEKDQKELKKLRSMKGSSMDSSEQKKTKK) is disordered. Position 584 is a phosphoserine (Ser584). The segment covering 586–601 (GVEKHDKEKDQKELKK) has biased composition (basic and acidic residues). The Rho-GAP domain maps to 648-836 (SNLANLCQRE…LILLELSTVF (189 aa)).

Functionally, GTPase activator for the Rho-type GTPases by converting them to an inactive GDP-bound state. The chain is Rho GTPase-activating protein 12 (Arhgap12) from Mus musculus (Mouse).